The following is a 288-amino-acid chain: Sulfur carrier protein FdhD (288 aa).

The Cysteine persulfide intermediate role is filled by cysteine 122. Residue 268–273 (FVRGER) participates in Mo-bis(molybdopterin guanine dinucleotide) binding.

It belongs to the FdhD family.

It localises to the cytoplasm. Its function is as follows. Required for formate dehydrogenase (FDH) activity. Acts as a sulfur carrier protein that transfers sulfur from IscS to the molybdenum cofactor prior to its insertion into FDH. This is Sulfur carrier protein FdhD from Anaeromyxobacter dehalogenans (strain 2CP-1 / ATCC BAA-258).